A 262-amino-acid polypeptide reads, in one-letter code: MINVFPVRAFRDNYIWIVHNQQFALIIDPGDATPVLTWLRQQKLQPIAILCTHHHHDHTGGISLLVQKFEIPVYGPASEKIPGMTHPLAEGDTLVFPELSLELSILDVPGHTAGHIACHGQNRLFCGDTLFACGCGRIFEGNAQQMFDSLQKLTDLPDETQVYCAHEYTLDNIRFARAIDPDNPELIELESNVEEKREQNMPTLPSSLAAEKATNPFLRCNQPAIIQSASRYAGRQLTDPVSVFAAIRDWKNNFRGNTDLPM.

Zn(2+) is bound by residues histidine 53, histidine 55, aspartate 57, histidine 58, histidine 111, aspartate 128, and histidine 166.

This sequence belongs to the metallo-beta-lactamase superfamily. Glyoxalase II family. As to quaternary structure, monomer. It depends on Zn(2+) as a cofactor.

It carries out the reaction an S-(2-hydroxyacyl)glutathione + H2O = a 2-hydroxy carboxylate + glutathione + H(+). It participates in secondary metabolite metabolism; methylglyoxal degradation; (R)-lactate from methylglyoxal: step 2/2. Its function is as follows. Thiolesterase that catalyzes the hydrolysis of S-D-lactoyl-glutathione to form glutathione and D-lactic acid. This is Hydroxyacylglutathione hydrolase from Nitrosomonas europaea (strain ATCC 19718 / CIP 103999 / KCTC 2705 / NBRC 14298).